The sequence spans 324 residues: Porphobilinogen deaminase 1 (324 aa).

Cys-249 carries the S-(dipyrrolylmethanemethyl)cysteine modification.

This sequence belongs to the HMBS family. Monomer. Requires dipyrromethane as cofactor.

The enzyme catalyses 4 porphobilinogen + H2O = hydroxymethylbilane + 4 NH4(+). The protein operates within porphyrin-containing compound metabolism; protoporphyrin-IX biosynthesis; coproporphyrinogen-III from 5-aminolevulinate: step 2/4. Functionally, tetrapolymerization of the monopyrrole PBG into the hydroxymethylbilane pre-uroporphyrinogen in several discrete steps. This chain is Porphobilinogen deaminase 1 (hemC1), found in Streptomyces avermitilis (strain ATCC 31267 / DSM 46492 / JCM 5070 / NBRC 14893 / NCIMB 12804 / NRRL 8165 / MA-4680).